Here is a 295-residue protein sequence, read N- to C-terminus: Proline-rich protein 18 (295 aa).

Residues M1–A13 show a composition bias toward pro residues. The interval M1–A133 is disordered. Residues P14 to A29 show a composition bias toward low complexity. Residue S47 is modified to Phosphoserine. Residue R83 is modified to Omega-N-methylarginine. A compositionally biased stretch (low complexity) spans A103–G126. At R172 the chain carries Asymmetric dimethylarginine. Residues A181–A192 show a composition bias toward low complexity. The tract at residues A181 to R227 is disordered. Residue R188 is modified to Omega-N-methylarginine.

This Homo sapiens (Human) protein is Proline-rich protein 18 (PRR18).